We begin with the raw amino-acid sequence, 505 residues long: N-succinylglutamate 5-semialdehyde dehydrogenase (505 aa).

234 to 239 (GSAHTG) contributes to the NAD(+) binding site. Active-site residues include E257 and C291.

The protein belongs to the aldehyde dehydrogenase family. AstD subfamily.

It catalyses the reaction N-succinyl-L-glutamate 5-semialdehyde + NAD(+) + H2O = N-succinyl-L-glutamate + NADH + 2 H(+). It functions in the pathway amino-acid degradation; L-arginine degradation via AST pathway; L-glutamate and succinate from L-arginine: step 4/5. Its function is as follows. Catalyzes the NAD-dependent reduction of succinylglutamate semialdehyde into succinylglutamate. This chain is N-succinylglutamate 5-semialdehyde dehydrogenase, found in Yersinia pestis bv. Antiqua (strain Antiqua).